A 404-amino-acid chain; its full sequence is Acetylornithine aminotransferase (404 aa).

Residues 113-114 (GT) and Phe-139 contribute to the pyridoxal 5'-phosphate site. Arg-142 provides a ligand contact to N(2)-acetyl-L-ornithine. Residue 224–227 (DEVQ) participates in pyridoxal 5'-phosphate binding. Lys-253 carries the post-translational modification N6-(pyridoxal phosphate)lysine. A N(2)-acetyl-L-ornithine-binding site is contributed by Ser-281. A pyridoxal 5'-phosphate-binding site is contributed by Thr-282.

Belongs to the class-III pyridoxal-phosphate-dependent aminotransferase family. ArgD subfamily. Homodimer. Requires pyridoxal 5'-phosphate as cofactor.

The protein resides in the cytoplasm. The enzyme catalyses N(2)-acetyl-L-ornithine + 2-oxoglutarate = N-acetyl-L-glutamate 5-semialdehyde + L-glutamate. The protein operates within amino-acid biosynthesis; L-arginine biosynthesis; N(2)-acetyl-L-ornithine from L-glutamate: step 4/4. This chain is Acetylornithine aminotransferase, found in Mycobacterium leprae (strain TN).